A 786-amino-acid polypeptide reads, in one-letter code: MSDLKEAIQLIDENKQFNPSTLNYFTKCLGDKNVGVKYHVISVFGSQSSGKSTLLNKLFDTKFDTMDAQVKRQQTTRGIWLSHSANIYSSGAANQSIPDFFVLDVEGSDGAERGEDQDFERKAALFALSVSEVLIVNMWENQVGLYQGNNMGLLKTVFEVNLSLFGKNENRHKVALLFVIRDFTGQTPLESLEASLVLELEKMWSQLSKPEGCEDTSFHDFFVPNFFGLGHKVFQPEQFDNDVKSLGDLFVDQDASFFKDEYHTHLPLDGWSLYAENCWEQIENNKDLDLPTQQILVARFKTDEIAAAAYNKFLNDYQSQVTDSLDGKELATVLKTLQSTCIDVDYDPFASRYAKKVYEERRDDLIKQLNTIIDETITNFVTRTTSSLIETFHKNARDRSLKGPFKLKIQSALEKASRTFKTNLAPFSELELLSSMDAYISKFEARVNTEVADLQERELNAIVARFNKGLTIKLKDTILHLLAKPTINVWDDVMKEFTSFLDGSLKKYTNEDGKIDFQTGATTDANDKTEHTLKRNAWSFLDHTVHGYLTEDNVVDIMRNVFNDKFRYDDDGMPKFWKNEAEVDASYRLAKSQALSVLDALAIVKNKDNVEILIPEALLESDGDGSDYEENGGQEEEEAGLYHQQRFSHVLSALQKDKIITKFKQFTDLVIIEAKRSIVNTTERIPLYMYALVVALGWGRIITILRNPATIILSIIVLAGAYFVHKLNLWGPLLQFANQATGQATAVLKQTVRSLVVDEEPKRKILVEPHESEGVDKEPSKNDQHL.

Topologically, residues 1–684 (MSDLKEAIQL…KRSIVNTTER (684 aa)) are cytoplasmic. The region spanning 35–262 (GVKYHVISVF…QDASFFKDEY (228 aa)) is the GB1/RHD3-type G domain. 45-52 (GSQSSGKS) provides a ligand contact to GTP. Residues 355–375 (KKVYEERRDDLIKQLNTIIDE) are a coiled coil. The chain crosses the membrane as a helical span at residues 685-705 (IPLYMYALVVALGWGRIITIL). The Lumenal portion of the chain corresponds to 706–708 (RNP). A helical transmembrane segment spans residues 709-729 (ATIILSIIVLAGAYFVHKLNL). The Cytoplasmic segment spans residues 730–786 (WGPLLQFANQATGQATAVLKQTVRSLVVDEEPKRKILVEPHESEGVDKEPSKNDQHL). The disordered stretch occupies residues 765-786 (ILVEPHESEGVDKEPSKNDQHL).

Belongs to the TRAFAC class dynamin-like GTPase superfamily. GB1/RHD3 GTPase family. RHD3 subfamily.

The protein localises to the endoplasmic reticulum membrane. Functionally, cooperates with the reticulon proteins and tubule-shaping DP1 family proteins to generate and maintain the structure of the tubular endoplasmic reticulum network. Has GTPase activity, which is required for its function in ER organization. This chain is Protein SEY1, found in Kluyveromyces lactis (strain ATCC 8585 / CBS 2359 / DSM 70799 / NBRC 1267 / NRRL Y-1140 / WM37) (Yeast).